The chain runs to 789 residues: Polyribonucleotide nucleotidyltransferase (789 aa).

Mg(2+)-binding residues include aspartate 494 and aspartate 500. A KH domain is found at 561-620; sequence PRIESIFINKDKIRNVIGSGGKNIREICEKTGARVEIMQDGTVMIYAINNDAVEYAKNMI. The S1 motif domain maps to 630–697; sequence GKVFDGTVIE…DREYVQLSMR (68 aa). A disordered region spans residues 709 to 789; sequence GELYNIRKTN…NEVPRKPRFF (81 aa). A compositionally biased stretch (basic residues) spans 737–749; sequence SEKKRRGSGRSRR. The span at 763-780 shows a compositional bias: low complexity; sequence NNGFGNGNRSFNDNRNGN.

This sequence belongs to the polyribonucleotide nucleotidyltransferase family. The cofactor is Mg(2+).

Its subcellular location is the cytoplasm. The catalysed reaction is RNA(n+1) + phosphate = RNA(n) + a ribonucleoside 5'-diphosphate. Functionally, involved in mRNA degradation. Catalyzes the phosphorolysis of single-stranded polyribonucleotides processively in the 3'- to 5'-direction. The chain is Polyribonucleotide nucleotidyltransferase from Ehrlichia ruminantium (strain Welgevonden).